A 113-amino-acid polypeptide reads, in one-letter code: U11-theraphotoxin-Hhn1f (113 aa).

An N-terminal signal peptide occupies residues 1 to 21 (MNTVRVTFLLVFVLAVSLGQA). A propeptide spanning residues 22 to 74 (DKDENRMEMQEKTEQGKSYLDFAENLLLQKLEELEAKLLEEDSEESRNSRQKR) is cleaved from the precursor. The tract at residues 61–83 (EEDSEESRNSRQKRCIGEGVPCD) is disordered. 3 cysteine pairs are disulfide-bonded: Cys75-Cys90, Cys82-Cys95, and Cys89-Cys110.

The protein belongs to the neurotoxin 14 (magi-1) family. 01 (HNTX-16) subfamily. In terms of tissue distribution, expressed by the venom gland.

It localises to the secreted. Functionally, probable ion channel inhibitor. This Cyriopagopus hainanus (Chinese bird spider) protein is U11-theraphotoxin-Hhn1f.